The primary structure comprises 393 residues: Pyridinium-3,5-bisthiocarboxylic acid mononucleotide nickel insertion protein (393 aa).

This sequence belongs to the LarC family.

The enzyme catalyses Ni(II)-pyridinium-3,5-bisthiocarboxylate mononucleotide = pyridinium-3,5-bisthiocarboxylate mononucleotide + Ni(2+). Functionally, involved in the biosynthesis of a nickel-pincer cofactor ((SCS)Ni(II) pincer complex). Binds Ni(2+), and functions in nickel delivery to pyridinium-3,5-bisthiocarboxylic acid mononucleotide (P2TMN), to form the mature cofactor. Is thus probably required for the activation of nickel-pincer cofactor-dependent enzymes. The chain is Pyridinium-3,5-bisthiocarboxylic acid mononucleotide nickel insertion protein from Nocardioides sp. (strain ATCC BAA-499 / JS614).